The chain runs to 402 residues: TBC1 domain family member 20 (402 aa).

Positions 1–27 (MALRPSKGDGSAGRWDRGAGKADFNAK) are disordered. Over residues 14-26 (RWDRGAGKADFNA) the composition is skewed to basic and acidic residues. In terms of domain architecture, Rab-GAP TBC spans 59–245 (LLTDEIRCQV…RLYDFFLACH (187 aa)). 2 consecutive transmembrane segments (helical) span residues 237-257 (LYDF…AVIV) and 366-386 (FVKL…LAVV).

The protein localises to the membrane. Functionally, GTPase-activating protein specific for Rab1 and Rab2 small GTPase families for which it can accelerate the intrinsic GTP hydrolysis rate by more than five orders of magnitude. Also shows GAP activity for RAB18 GTPase. Promotes RAB18 dissociation from the endoplasmic reticulum (ER) membrane into the cytosol, probably through stimulating RAB18 GTP-hydrolysis. Involved in maintaining endoplasmic reticulum structure. This Mus musculus (Mouse) protein is TBC1 domain family member 20.